We begin with the raw amino-acid sequence, 428 residues long: Elongation factor 1-alpha (428 aa).

Residues 5-225 (KPILNVAFIG…DGFQPPEKPT (221 aa)) form the tr-type G domain. The tract at residues 14–21 (GHVDAGKS) is G1. 14–21 (GHVDAGKS) contacts GTP. Ser21 contacts Mg(2+). Residues 70-74 (GVTID) are G2. The tract at residues 91-94 (DCPG) is G3. Residues 91–95 (DCPGH) and 149–152 (NKMD) contribute to the GTP site. The G4 stretch occupies residues 149-152 (NKMD). Residues 189-191 (ASL) form a G5 region.

This sequence belongs to the TRAFAC class translation factor GTPase superfamily. Classic translation factor GTPase family. EF-Tu/EF-1A subfamily.

The protein resides in the cytoplasm. The catalysed reaction is GTP + H2O = GDP + phosphate + H(+). Its function is as follows. GTP hydrolase that promotes the GTP-dependent binding of aminoacyl-tRNA to the A-site of ribosomes during protein biosynthesis. This Methanococcus vannielii (strain ATCC 35089 / DSM 1224 / JCM 13029 / OCM 148 / SB) protein is Elongation factor 1-alpha.